The sequence spans 280 residues: Ribosomal RNA small subunit methyltransferase A (280 aa).

Positions 24, 49, 70, 95, and 118 each coordinate S-adenosyl-L-methionine.

This sequence belongs to the class I-like SAM-binding methyltransferase superfamily. rRNA adenine N(6)-methyltransferase family. RsmA subfamily.

It is found in the cytoplasm. The catalysed reaction is adenosine(1518)/adenosine(1519) in 16S rRNA + 4 S-adenosyl-L-methionine = N(6)-dimethyladenosine(1518)/N(6)-dimethyladenosine(1519) in 16S rRNA + 4 S-adenosyl-L-homocysteine + 4 H(+). In terms of biological role, specifically dimethylates two adjacent adenosines (A1518 and A1519) in the loop of a conserved hairpin near the 3'-end of 16S rRNA in the 30S particle. May play a critical role in biogenesis of 30S subunits. The protein is Ribosomal RNA small subunit methyltransferase A of Syntrophus aciditrophicus (strain SB).